Consider the following 315-residue polypeptide: Histone-lysine N-methyltransferase SETMAR (315 aa).

Residues Pro-74–Gly-137 enclose the Pre-SET domain. 9 residues coordinate Zn(2+): Cys-76, Cys-78, Cys-83, Cys-88, Cys-90, Cys-119, Cys-123, Cys-125, and Cys-129. The SET domain maps to Phe-140–Ser-264. S-adenosyl-L-methionine contacts are provided by residues Lys-150–Trp-152, Tyr-193, Arg-221, and Asn-224–His-225. Zn(2+)-binding residues include Cys-227, Cys-288, Cys-290, and Cys-295. In terms of domain architecture, Post-SET spans Pro-284–Pro-300.

It belongs to the class V-like SAM-binding methyltransferase superfamily.

The protein localises to the nucleus. Its subcellular location is the chromosome. The enzyme catalyses L-lysyl(36)-[histone H3] + 2 S-adenosyl-L-methionine = N(6),N(6)-dimethyl-L-lysyl(36)-[histone H3] + 2 S-adenosyl-L-homocysteine + 2 H(+). Functionally, histone methyltransferase that methylates 'Lys-4' and 'Lys-36' of histone H3, 2 specific tags for epigenetic transcriptional activation. Specifically mediates dimethylation of H3 'Lys-36'. This chain is Histone-lysine N-methyltransferase SETMAR, found in Rattus norvegicus (Rat).